The chain runs to 449 residues: Glutathione reductase (449 aa).

FAD is bound by residues serine 15, glycine 16, glutamate 35, threonine 42, cysteine 43, and lysine 51. Serine 15 contributes to the glutathione binding site. The cysteines at positions 43 and 48 are disulfide-linked. Residue tyrosine 99 participates in glutathione binding. Alanine 115 is a binding site for FAD. NADP(+) contacts are provided by glycine 175, isoleucine 178, glutamate 181, arginine 198, arginine 204, and glycine 261. FAD-binding residues include aspartate 302 and threonine 310. NADP(+) is bound at residue alanine 340. An FAD-binding site is contributed by histidine 435. Histidine 435 acts as the Proton acceptor in catalysis.

The protein belongs to the class-I pyridine nucleotide-disulfide oxidoreductase family. As to quaternary structure, homodimer. FAD is required as a cofactor.

The protein resides in the cytoplasm. It catalyses the reaction 2 glutathione + NADP(+) = glutathione disulfide + NADPH + H(+). Its pathway is xenobiotic degradation; (2,4,5-trichlorophenoxy)acetate degradation. In terms of biological role, catalyzes the reduction of glutathione disulfide (GSSG) to reduced glutathione (GSH). Constitutes the major mechanism to maintain a high GSH:GSSG ratio in the cytosol. The chain is Glutathione reductase (gor) from Burkholderia cepacia (Pseudomonas cepacia).